Here is a 52-residue protein sequence, read N- to C-terminus: Ovomucoid (52 aa).

Residues 2 to 52 (VDCSEYPKPACPKDYRPVCGSDNKTYGNKCNFCNAVVESNGTLTLNRFGKC) form the Kazal-like domain. 3 disulfide bridges follow: C4/C34, C12/C31, and C20/C52. N41 carries an N-linked (GlcNAc...) asparagine glycan.

The protein resides in the secreted. The polypeptide is Ovomucoid (Coturnix delegorguei (Harlequin quail)).